The sequence spans 98 residues: Large ribosomal subunit protein uL23 (98 aa).

This sequence belongs to the universal ribosomal protein uL23 family. In terms of assembly, part of the 50S ribosomal subunit. Contacts protein L29, and trigger factor when it is bound to the ribosome.

In terms of biological role, one of the early assembly proteins it binds 23S rRNA. One of the proteins that surrounds the polypeptide exit tunnel on the outside of the ribosome. Forms the main docking site for trigger factor binding to the ribosome. The polypeptide is Large ribosomal subunit protein uL23 (Legionella pneumophila (strain Paris)).